Here is a 336-residue protein sequence, read N- to C-terminus: MYYPFVRKALFQLDPERAHEFTFQQLRRITGTPFEALVRQKVPVKPVSCMGLTFKNPLGLAAGLDKDGECIDALGAMGFGSIEIGTVTPRPQPGNDKPRLFRLVDAEGLINRMGFNNLGVDNLIENVKKAHYDGVLGINIGKNKDTPVEQGKDDYLICMDKIYPYAGYIAINISSPNTPGLRTLQYGEALDDLLIAIKNKQNDLQKIHQKYVPIAVKIAPDLSEEELIQVADSLVRHNIDGVIATNTTLDRSLVQGMKNCDQTGGLSGRPLQLKSTEIIRRLSQELNGRLPIIGVGGIDSVIAAREKIAAGATLVQIYSGFIFKGPPLIKEIVSNI.

Residues 62–66 (AGLDK) and Thr86 contribute to the FMN site. Lys66 provides a ligand contact to substrate. 111–115 (NRMGF) contacts substrate. Residues Asn139 and Asn172 each coordinate FMN. Asn172 lines the substrate pocket. The active-site Nucleophile is Ser175. Asn177 serves as a coordination point for substrate. Residues Lys217 and Thr245 each contribute to the FMN site. Substrate is bound at residue 246-247 (NT). FMN is bound by residues Gly268, Gly297, and 318–319 (YS).

Belongs to the dihydroorotate dehydrogenase family. Type 2 subfamily. Monomer. FMN serves as cofactor.

It localises to the cell membrane. The enzyme catalyses (S)-dihydroorotate + a quinone = orotate + a quinol. Its pathway is pyrimidine metabolism; UMP biosynthesis via de novo pathway; orotate from (S)-dihydroorotate (quinone route): step 1/1. Functionally, catalyzes the conversion of dihydroorotate to orotate with quinone as electron acceptor. The chain is Dihydroorotate dehydrogenase (quinone) from Escherichia fergusonii (strain ATCC 35469 / DSM 13698 / CCUG 18766 / IAM 14443 / JCM 21226 / LMG 7866 / NBRC 102419 / NCTC 12128 / CDC 0568-73).